The primary structure comprises 135 residues: Probable histone H2A.8 (135 aa).

It belongs to the histone H2A family. The nucleosome is a histone octamer containing two molecules each of H2A, H2B, H3 and H4 assembled in one H3-H4 heterotetramer and two H2A-H2B heterodimers. The octamer wraps approximately 147 bp of DNA.

The protein localises to the nucleus. It localises to the chromosome. In terms of biological role, core component of nucleosome. Nucleosomes wrap and compact DNA into chromatin, limiting DNA accessibility to the cellular machineries which require DNA as a template. Histones thereby play a central role in transcription regulation, DNA repair, DNA replication and chromosomal stability. DNA accessibility is regulated via a complex set of post-translational modifications of histones, also called histone code, and nucleosome remodeling. This is Probable histone H2A.8 from Oryza sativa subsp. indica (Rice).